The primary structure comprises 546 residues: Chaperonin GroEL (546 aa).

Residues 30–33, lysine 51, 87–91, glycine 415, 479–481, and aspartate 495 contribute to the ATP site; these read TLGP, DGTTT, and NAA.

Belongs to the chaperonin (HSP60) family. Forms a cylinder of 14 subunits composed of two heptameric rings stacked back-to-back. Interacts with the co-chaperonin GroES.

The protein localises to the cytoplasm. It catalyses the reaction ATP + H2O + a folded polypeptide = ADP + phosphate + an unfolded polypeptide.. Together with its co-chaperonin GroES, plays an essential role in assisting protein folding. The GroEL-GroES system forms a nano-cage that allows encapsulation of the non-native substrate proteins and provides a physical environment optimized to promote and accelerate protein folding. This Allochromatium vinosum (Chromatium vinosum) protein is Chaperonin GroEL.